Consider the following 342-residue polypeptide: Arginase 1, mitochondrial (342 aa).

The N-terminal 22 residues, 1–22 (MSRIIGRKGINYIHRLNSASFT), are a transit peptide targeting the mitochondrion. L-ornithine is bound by residues Ser-77 and 96–99 (GSTN). The Mn(2+) site is built by His-161, Asp-185, His-187, and Asp-189. 189–191 (DIY) contacts L-ornithine. 195–197 (EGN) is a binding site for substrate. Ser-224 provides a ligand contact to L-ornithine. The Mn(2+) site is built by Asp-270 and Asp-272. Glu-313 provides a ligand contact to substrate.

It belongs to the arginase family. In terms of assembly, forms homohexamers. It depends on Mn(2+) as a cofactor. Expressed in vasculature of roots, root tips, cotyledons, leaves, cauline leaves, stems, sepals and pollen.

It localises to the mitochondrion. The enzyme catalyses L-arginine + H2O = urea + L-ornithine. The catalysed reaction is agmatine + H2O = urea + putrescine. The protein operates within nitrogen metabolism; urea cycle; L-ornithine and urea from L-arginine: step 1/1. It participates in amine and polyamine biosynthesis; putrescine biosynthesis via agmatine pathway; putrescine from agmatine: step 1/1. Catalyzes the hydrolysis of L-arginine to urea and L-ornithine. The latter can be utilized in the urea cycle or as a precursor for the synthesis of both polyamines and proline. Possesses agmatinase activity. Catalyzes the formation of putrescine from agmatine. The protein is Arginase 1, mitochondrial of Arabidopsis thaliana (Mouse-ear cress).